Here is an 836-residue protein sequence, read N- to C-terminus: Homeobox-leucine zipper protein ATHB-15 (836 aa).

Residues 14–77 constitute a DNA-binding region (homeobox); that stretch reads DNGKYVRYTP…NRRCREKQRK (64 aa). Residues 72 to 115 adopt a coiled-coil conformation; it reads REKQRKEASRLQAVNRKLTAMNKLLMEENDRLQKQVSQLVHENS. The 229-residue stretch at 151–379 folds into the START domain; sequence RDASPAGLLS…IAQEVTQTNS (229 aa).

This sequence belongs to the HD-ZIP homeobox family. Class III subfamily. In terms of assembly, interacts with ESR1 and ESR2. Interacts with ZPR3. In terms of tissue distribution, highly expressed the developing vascular elements and the adaxial portion of cotyledons. Expressed in developing ovules, stamens and carpels. Expressed in procambium and shoot meristem.

It is found in the nucleus. Probable transcription factor involved in the regulation of meristem development to promote lateral organ formation. May regulates procambial and vascular tissue formation or maintenance, and vascular development in inflorescence stems. The sequence is that of Homeobox-leucine zipper protein ATHB-15 (ATHB-15) from Arabidopsis thaliana (Mouse-ear cress).